The chain runs to 22 residues: Caerin-3.2 (22 aa).

K22 carries the post-translational modification Lysine amide.

As to expression, expressed by the skin parotoid and/or rostral glands.

The protein resides in the secreted. Functionally, antibacterial peptide, that adopts an alpha helical conformation which can disrupt bacterial membranes. Each caerin displays a different antimicrobial specificity. This Ranoidea caerulea (Green tree frog) protein is Caerin-3.2.